The chain runs to 467 residues: Cell division protein FtsP (467 aa).

Positions methionine 1–alanine 28 form a signal peptide, tat-type signal.

Belongs to the FtsP family. Post-translationally, predicted to be exported by the Tat system. The position of the signal peptide cleavage has not been experimentally proven.

The protein localises to the periplasm. Its function is as follows. Cell division protein that is required for growth during stress conditions. May be involved in protecting or stabilizing the divisomal assembly under conditions of stress. This is Cell division protein FtsP from Histophilus somni (strain 2336) (Haemophilus somnus).